The following is a 267-amino-acid chain: DNA repair protein RecO (267 aa).

Belongs to the RecO family.

In terms of biological role, involved in DNA repair and RecF pathway recombination. This Moorella thermoacetica (strain ATCC 39073 / JCM 9320) protein is DNA repair protein RecO.